Consider the following 461-residue polypeptide: Tubulin gamma-1 chain (461 aa).

142 to 148 (AGGTGSG) lines the GTP pocket.

This sequence belongs to the tubulin family.

It is found in the cytoplasm. The protein resides in the cytoskeleton. It localises to the microtubule organizing center. The protein localises to the centrosome. Its function is as follows. Tubulin is the major constituent of microtubules. The gamma chain is found at microtubule organizing centers (MTOC) such as the spindle poles or the centrosome, suggesting that it is involved in the minus-end nucleation of microtubule assembly. The protein is Tubulin gamma-1 chain of Euplotoides octocarinatus (Freshwater ciliate).